We begin with the raw amino-acid sequence, 268 residues long: AN1-type zinc finger protein 1 (268 aa).

Ala2 bears the N-acetylalanine mark. 2 AN1-type zinc fingers span residues 4–52 (LDIG…VVKE) and 58–106 (EHKS…VAKP). The Zn(2+) site is built by Cys10, Cys15, Cys25, Cys28, Cys33, His36, His42, Cys44, Cys64, Cys69, Cys79, Cys82, Cys87, His90, His96, and Cys98. The ubiquitin-like stretch occupies residues 160–260 (QTERTYFQVY…EYLNDEEQFL (101 aa)).

As to quaternary structure, associates with the 26S proteasome; this association occurs upon exposure to arsenite and is reduced in the presence of ATP. Interacts (via AN1-type 1 and 2 zinc fingers) with PSMD1; this interaction is increased upon arsenite treatment and occurs in an ATP-independent manner. Interacts with PSMC4. Interacts with PSMA1. Interacts (via its ubiquitin-like region) with VCP; this interaction occurs in an arsenite-dependent manner and is necessary for the recruitment of the ubiquitin-selective ATPase VCP to stress granules (SGs).

It localises to the cytoplasm. The protein resides in the stress granule. Plays a role in the regulation of cytoplasmic stress granules (SGs) turnover. SGs are dynamic and transient cytoplasmic ribonucleoprotein assemblies important for cellular protein homeostasis when protein production is suspended after acute exogenous stress. Associates with SGs and is involved in the efficient and specific arsenite-induced clearance process of SGs through the recruitment of the ubiquitin-selective ATPase VCP and the 26S proteasome. This process requires both complexes for efficient degradation of damaged ubiquitinated SG proteins during recovery from arsenite stress, and hence avoiding aberrant cytoplasmic SGs degradation via autophagy. This is AN1-type zinc finger protein 1 from Mus musculus (Mouse).